The following is a 481-amino-acid chain: Zinc metalloproteinase/disintegrin (481 aa).

Residues 1–20 (MIQVLLVTICLAVFPYQGSS) form the signal peptide. Positions 21–190 (IILESGNVDD…KASQLYLTPE (170 aa)) are excised as a propeptide. Positions 197–392 (RYIKLAIVVD…DNPQCILNAP (196 aa)) constitute a Peptidase M12B domain. 3 cysteine pairs are disulfide-bonded: Cys308–Cys387, Cys349–Cys371, and Cys351–Cys354. Zn(2+) is bound at residue His333. Glu334 is an active-site residue. Residues His337 and His343 each coordinate Zn(2+). A propeptide spanning residues 393 to 408 (LRTDTVSTPVSGNEFL) is cleaved from the precursor. The 82-residue stretch at 400–481 (TPVSGNEFLE…ADCPRNGLYS (82 aa)) folds into the Disintegrin domain. 6 cysteine pairs are disulfide-bonded: Cys414-Cys429, Cys416-Cys424, Cys423-Cys446, Cys437-Cys443, Cys442-Cys467, and Cys455-Cys474. Residues 459 to 461 (RGD) carry the Cell attachment site motif.

This sequence belongs to the venom metalloproteinase (M12B) family. P-II subfamily. P-IIa sub-subfamily. In terms of assembly, monomer. Zn(2+) is required as a cofactor. Expressed by the venom gland.

It localises to the secreted. In terms of biological role, impairs hemostasis in the envenomed animal. Inhibits platelet aggregation induced by ADP, thrombin, platelet-activating factor and collagen. Acts by inhibiting fibrinogen interaction with platelet receptors GPIIb/GPIIIa (ITGA2B/ITGB3). In Protobothrops elegans (Elegant pitviper), this protein is Zinc metalloproteinase/disintegrin.